The following is a 505-amino-acid chain: 2,3-bisphosphoglycerate-independent phosphoglycerate mutase (505 aa).

The Mn(2+) site is built by Asp12 and Ser62. The Phosphoserine intermediate role is filled by Ser62. Substrate is bound by residues His123, 153 to 154, Arg185, Arg191, 257 to 260, and Lys330; these read RD and RPDR. Residues Asp397, His401, Asp438, His439, and His456 each contribute to the Mn(2+) site.

Belongs to the BPG-independent phosphoglycerate mutase family. As to quaternary structure, monomer. The cofactor is Mn(2+).

The catalysed reaction is (2R)-2-phosphoglycerate = (2R)-3-phosphoglycerate. It functions in the pathway carbohydrate degradation; glycolysis; pyruvate from D-glyceraldehyde 3-phosphate: step 3/5. In terms of biological role, catalyzes the interconversion of 2-phosphoglycerate and 3-phosphoglycerate. This Staphylococcus epidermidis (strain ATCC 35984 / DSM 28319 / BCRC 17069 / CCUG 31568 / BM 3577 / RP62A) protein is 2,3-bisphosphoglycerate-independent phosphoglycerate mutase.